The primary structure comprises 269 residues: uncharacterized protein (269 aa).

Residues 1–12 show a composition bias toward basic residues; sequence MSKRTNNKKRKH. Residues 1–82 form a disordered region; the sequence is MSKRTNNKKR…KKKENGNENV (82 aa). The segment covering 21-33 has biased composition (acidic residues); it reads PENQDENQDEEFL. Residues 34-63 show a composition bias toward basic and acidic residues; that stretch reads EDKNKDKNQNKNKDKNKNKDMNKNKNKDMN.

This is an uncharacterized protein from Dictyostelium discoideum (Social amoeba).